The primary structure comprises 512 residues: MEEYKVYLELDRSRQQDFLYPFIFQESIYGLVYGHDLNGSILVENVDYDNKSSLLIVKRLITRMYQQNHLIVSANDFNKNQQFWGYNKNLYSQIISEAFAIVVEIPFYSQLRSSLEGLEGAEVIKSYNKLRSIHAIFPFFEDKFTYLNYVSDVQIPYPIHLEILVQILRYWVKDPPLFHLLRSFLYQYCNWNSFINPKKSISSFSKSNPRFFFFLYNFYVCEYESIFLFLRKKSSHLRLTSFSVLFERIYFYAKIEHLVEVFPKDFLSTLSLFKDPLIHYLRYQGKSILASKNAPLLMNKWKYYLISLWQCYFNVWSQPGTIYINQLSDHSFHFFWGGYFSNVRLNLSVVRSQMLENSFLIEIVMKKLDTIVPILPIIRSLAKAKFCNVLGHPISKPVWADLSDFGIIDRFLRIRRNISHYYNGSSKKKSLYRIKYILRLSCIKTLVRKHKSTVRAFLKRLGSEELLKEFFTEEEDILSLIFPRASSTLQRLYGGRIWYLDIIFSNDLVNHS.

It belongs to the intron maturase 2 family. MatK subfamily.

It localises to the plastid. Its subcellular location is the chloroplast. Its function is as follows. Usually encoded in the trnK tRNA gene intron. Probably assists in splicing its own and other chloroplast group II introns. This Dalea wrightii (Wright's prairie clover) protein is Maturase K.